Consider the following 442-residue polypeptide: tRNA-2-methylthio-N(6)-dimethylallyladenosine synthase (442 aa).

Residues 2–117 (KSLYIKTYGC…LPELIVKASR (116 aa)) form the MTTase N-terminal domain. Residues Cys-11, Cys-47, Cys-80, Cys-157, Cys-161, and Cys-164 each coordinate [4Fe-4S] cluster. The region spanning 143–374 (NSQGSSAFLS…QKLINKQQLE (232 aa)) is the Radical SAM core domain. One can recognise a TRAM domain in the interval 377–441 (QSMVGKTIPV…QNSLLGRELQ (65 aa)).

This sequence belongs to the methylthiotransferase family. MiaB subfamily. In terms of assembly, monomer. The cofactor is [4Fe-4S] cluster.

It is found in the cytoplasm. It catalyses the reaction N(6)-dimethylallyladenosine(37) in tRNA + (sulfur carrier)-SH + AH2 + 2 S-adenosyl-L-methionine = 2-methylsulfanyl-N(6)-dimethylallyladenosine(37) in tRNA + (sulfur carrier)-H + 5'-deoxyadenosine + L-methionine + A + S-adenosyl-L-homocysteine + 2 H(+). Functionally, catalyzes the methylthiolation of N6-(dimethylallyl)adenosine (i(6)A), leading to the formation of 2-methylthio-N6-(dimethylallyl)adenosine (ms(2)i(6)A) at position 37 in tRNAs that read codons beginning with uridine. This chain is tRNA-2-methylthio-N(6)-dimethylallyladenosine synthase, found in Wolbachia sp. subsp. Brugia malayi (strain TRS).